Reading from the N-terminus, the 181-residue chain is Oligoribonuclease (181 aa).

In terms of domain architecture, Exonuclease spans 8 to 171 (LIWIDLEMTG…DDIRESIAEL (164 aa)). Residue Y129 is part of the active site.

This sequence belongs to the oligoribonuclease family.

The protein localises to the cytoplasm. In terms of biological role, 3'-to-5' exoribonuclease specific for small oligoribonucleotides. This chain is Oligoribonuclease, found in Vibrio vulnificus (strain CMCP6).